A 459-amino-acid polypeptide reads, in one-letter code: tRNA modification GTPase MnmE (459 aa).

(6S)-5-formyl-5,6,7,8-tetrahydrofolate-binding residues include Arg-20, Glu-85, and Arg-124. The 160-residue stretch at 221–380 folds into the TrmE-type G domain; sequence GLSTVIIGRP…LEMAIQSLFF (160 aa). Asn-231 provides a ligand contact to K(+). GTP contacts are provided by residues 231–236, 250–256, and 275–278; these read NVGKSS, TDIPGTT, and DTAG. A Mg(2+)-binding site is contributed by Ser-235. Residues Thr-250, Ile-252, and Thr-255 each coordinate K(+). A Mg(2+)-binding site is contributed by Thr-256. Lys-459 lines the (6S)-5-formyl-5,6,7,8-tetrahydrofolate pocket.

Belongs to the TRAFAC class TrmE-Era-EngA-EngB-Septin-like GTPase superfamily. TrmE GTPase family. Homodimer. Heterotetramer of two MnmE and two MnmG subunits. K(+) is required as a cofactor.

The protein resides in the cytoplasm. Its function is as follows. Exhibits a very high intrinsic GTPase hydrolysis rate. Involved in the addition of a carboxymethylaminomethyl (cmnm) group at the wobble position (U34) of certain tRNAs, forming tRNA-cmnm(5)s(2)U34. The sequence is that of tRNA modification GTPase MnmE from Bacillus pumilus (strain SAFR-032).